The primary structure comprises 667 residues: Bifunctional polymyxin resistance protein ArnA (667 aa).

Residues Met1 to Leu304 form a formyltransferase ArnAFT region. The active-site Proton donor; for formyltransferase activity is His104. (6R)-10-formyltetrahydrofolate is bound by residues Arg114 and Val136–Asp140. The tract at residues Arg314 to Ala667 is dehydrogenase ArnADH. NAD(+)-binding positions include Asp347 and Asp368 to Ile369. UDP-alpha-D-glucuronate-binding positions include Ala393, Tyr398, and Thr432 to Ser433. Residue Glu434 is the Proton acceptor; for decarboxylase activity of the active site. UDP-alpha-D-glucuronate is bound by residues Arg460, Asn492, Lys526 to Arg535, and Tyr613. The active-site Proton donor; for decarboxylase activity is Arg619.

It in the N-terminal section; belongs to the Fmt family. UDP-L-Ara4N formyltransferase subfamily. In the C-terminal section; belongs to the NAD(P)-dependent epimerase/dehydratase family. UDP-glucuronic acid decarboxylase subfamily. Homohexamer, formed by a dimer of trimers.

It carries out the reaction UDP-alpha-D-glucuronate + NAD(+) = UDP-beta-L-threo-pentopyranos-4-ulose + CO2 + NADH. It catalyses the reaction UDP-4-amino-4-deoxy-beta-L-arabinose + (6R)-10-formyltetrahydrofolate = UDP-4-deoxy-4-formamido-beta-L-arabinose + (6S)-5,6,7,8-tetrahydrofolate + H(+). The protein operates within nucleotide-sugar biosynthesis; UDP-4-deoxy-4-formamido-beta-L-arabinose biosynthesis; UDP-4-deoxy-4-formamido-beta-L-arabinose from UDP-alpha-D-glucuronate: step 1/3. It participates in nucleotide-sugar biosynthesis; UDP-4-deoxy-4-formamido-beta-L-arabinose biosynthesis; UDP-4-deoxy-4-formamido-beta-L-arabinose from UDP-alpha-D-glucuronate: step 3/3. Its pathway is bacterial outer membrane biogenesis; lipopolysaccharide biosynthesis. Bifunctional enzyme that catalyzes the oxidative decarboxylation of UDP-glucuronic acid (UDP-GlcUA) to UDP-4-keto-arabinose (UDP-Ara4O) and the addition of a formyl group to UDP-4-amino-4-deoxy-L-arabinose (UDP-L-Ara4N) to form UDP-L-4-formamido-arabinose (UDP-L-Ara4FN). The modified arabinose is attached to lipid A and is required for resistance to polymyxin and cationic antimicrobial peptides. The polypeptide is Bifunctional polymyxin resistance protein ArnA (Yersinia pestis bv. Antiqua (strain Antiqua)).